The following is a 510-amino-acid chain: NAD(P)H-quinone oxidoreductase subunit 2 B, chloroplastic (510 aa).

Transmembrane regions (helical) follow at residues 24–44 (LLFF…GLIL), 57–77 (IPWL…ALLF), 99–119 (IFQF…VEYI), 124–144 (MAIT…MFLC), 149–169 (LITI…LSGY), 183–203 (YLLM…WLYG), 227–247 (PGIS…LSPA), 295–315 (WHLL…LIAI), 323–343 (MLAY…IVGD), 354–374 (YMLF…LFGL), 395–415 (ALSL…AGFF), 418–438 (LYLF…IGLL), and 484–504 (MIVC…IIAI).

Belongs to the complex I subunit 2 family. As to quaternary structure, NDH is composed of at least 16 different subunits, 5 of which are encoded in the nucleus.

The protein localises to the plastid. Its subcellular location is the chloroplast thylakoid membrane. It carries out the reaction a plastoquinone + NADH + (n+1) H(+)(in) = a plastoquinol + NAD(+) + n H(+)(out). It catalyses the reaction a plastoquinone + NADPH + (n+1) H(+)(in) = a plastoquinol + NADP(+) + n H(+)(out). Functionally, NDH shuttles electrons from NAD(P)H:plastoquinone, via FMN and iron-sulfur (Fe-S) centers, to quinones in the photosynthetic chain and possibly in a chloroplast respiratory chain. The immediate electron acceptor for the enzyme in this species is believed to be plastoquinone. Couples the redox reaction to proton translocation, and thus conserves the redox energy in a proton gradient. This chain is NAD(P)H-quinone oxidoreductase subunit 2 B, chloroplastic, found in Guizotia abyssinica (Niger).